Here is a 300-residue protein sequence, read N- to C-terminus: DDRGK domain-containing protein 1 (300 aa).

Over 1-2 (MD) the chain is Lumenal. The chain crosses the membrane as a helical span at residues 3–23 (VVLYIAAAAILLVLIVFSVKI). The Cytoplasmic segment spans residues 24 to 300 (RGRTQDADVE…NLTPDIHSSA (277 aa)). The disordered stretch occupies residues 28-173 (QDADVEDHQN…RVKEEQERRE (146 aa)). Over residues 78 to 90 (NEDSPVEADEDEE) the composition is skewed to acidic residues. Over residues 112-173 (KLEEKQARKA…RVKEEQERRE (62 aa)) the composition is skewed to basic and acidic residues. The UFM1-interacting motif (UFIM) motif lies at 183–197 (SFIIEDQGEAEELTE). The region spanning 217 to 261 (VLLEDLASQFGLRTQDAIARLQDLIADGSLTGVIDDRGKFIFITP) is the PCI domain.

This sequence belongs to the DDRGK1 family. In terms of assembly, component of the UFM1 ribosome E3 ligase (UREL) complex, composed of ufl1, ddrgk1 and cdk5rap3.

The protein resides in the endoplasmic reticulum membrane. Component of the UFM1 ribosome E3 ligase (UREL) complex, a multiprotein complex that catalyzes ufmylation of endoplasmic reticulum-docked proteins. The UREL complex plays a key role in ribosome recycling by mediating mono-ufmylation of the RPL26/uL24 subunit of the 60S ribosome following ribosome dissociation: ufmylation weakens the junction between post-termination 60S subunits and SEC61 translocons, promoting release and recycling of the large ribosomal subunit from the endoplasmic reticulum membrane. Ufmylation of RPL26/uL24 and subsequent 60S ribosome recycling either take place after normal termination of translation or after ribosome stalling during cotranslational translocation at the endoplasmic reticulum. Within the UREL complex, DDRGK1 tethers the complex to the endoplasmic reticulum membrane to restrict its activity to endoplasmic reticulum-docked ribosomes and acts as an ufmylation 'reader': following RPL26/uL24 ufmylation, DDRGK1 specifically binds to ufmylated RPL26/uL24 via its UFIM motif, resulting in stable association between the 60S ribosome and the UREL complex, followed by dissociation of the 60S ribosome subunit from the endoplasmic reticulum membrane. The UREL complex is also involved in reticulophagy in response to endoplasmic reticulum stress by promoting ufmylation of proteins such as CYB5R3 and RPN1, thereby promoting lysosomal degradation of ufmylated proteins. Plays a role in cartilage development through sox9, inhibiting the ubiquitin-mediated proteasomal degradation of this transcriptional regulator. Required for stabilization and ufmylation of ATG9A. The sequence is that of DDRGK domain-containing protein 1 from Danio rerio (Zebrafish).